The chain runs to 981 residues: MAEGGAADLDTQRSDIATLLKTSLRKGDTWYLVDSRWFKQWKKYVGFDSWDKYQMGDQNVYPGPIDNSGLLKDGDAQSLKEHLIDELDYILLPTEGWNKLVSWYTLMEGQEPIARKVVEQGMFVKHCKVEVYLTELKLCENGNMNNVVTRRFSKADTIDTIEKEIRKIFSIPDEKETRLWNKYMSNTFEPLNKPDSTIQDAGLYQGQVLVIEQKNEDGTWPRGPSTPKSPGASNFSTLPKISPSSLSNNYNNMNNRNVKNSNYCLPSYTAYKNYDYSEPGRNNEQPGLCGLSNLGNTCFMNSAIQCLSNTPPLTEYFLNDKYQEELNFDNPLGMRGEIAKSYAELIKQMWSGKFSYVTPRAFKTQVGRFAPQFSGYQQQDCQELLAFLLDGLHEDLNRIRKKPYIQLKDADGRPDKVVAEEAWENHLKRNDSIIVDIFHGLFKSTLVCPECAKISVTFDPFCYLTLPLPMKKERTLEVYLVRMDPLTKPMQYKVVVPKIGNILDLCTALSALSGIPADKMIVTDIYNHRFHRIFAMDENLSSIMERDDIYVFEININRTEDTEHVIIPVCLREKFRHSSYTHHTGSSLFGQPFLMAVPRNNTEDKLYNLLLLRMCRYVKISTETEETEGSLHCCKDQNINGNGPNGIHEEGSPSEMETDEPDDESSQDQELPSENENSQSEDSVGGDNDSENGLCTEDTCKGQLTGHKKRLFTFQFNNLGNTDINYIKDDTRHIRFDDRQLRLDERSFLALDWDPDLKKRYFDENAAEDFEKHESVEYKPPKKPFVKLKDCIELFTTKEKLGAEDPWYCPNCKEHQQATKKLDLWSLPPVLVVHLKRFSYSRYMRDKLDTLVDFPINDLDMSEFLINPNAGPCRYNLIAVSNHYGGMGGGHYTAFAKNKDDGKWYYFDDSSVSTASEDQIVSKAAYVLFYQRQDTFSGTGFFPLDRETKGASAATGIPLESDEDSNDNDNDIENENCMHTN.

Ala-2 bears the N-acetylalanine mark. The tract at residues 2 to 223 is mediates interaction with SART3; that stretch reads AEGGAADLDT…KNEDGTWPRG (222 aa). Residues 7-118 enclose the DUSP domain; the sequence is ADLDTQRSDI…GQEPIARKVV (112 aa). The interval 216 to 237 is disordered; the sequence is EDGTWPRGPSTPKSPGASNFST. Thr-226 is subject to Phosphothreonine. Residues 226–237 show a composition bias toward polar residues; the sequence is TPKSPGASNFST. Phosphoserine is present on residues Ser-229 and Ser-242. One can recognise a USP domain in the interval 289 to 933; it reads CGLSNLGNTC…AAYVLFYQRQ (645 aa). Cys-298 serves as the catalytic Nucleophile. Thr-602 carries the post-translational modification Phosphothreonine. A disordered region spans residues 629 to 694; that stretch reads GSLHCCKDQN…GGDNDSENGL (66 aa). A compositionally biased stretch (acidic residues) spans 656-673; that stretch reads METDEPDDESSQDQELPS. His-891 acts as the Proton acceptor in catalysis. The disordered stretch occupies residues 952–981; sequence SAATGIPLESDEDSNDNDNDIENENCMHTN. The span at 960-974 shows a compositional bias: acidic residues; it reads ESDEDSNDNDNDIEN. Phosphoserine occurs at positions 961 and 965.

The protein belongs to the peptidase C19 family. As to quaternary structure, a homodimer structure has been reported; however it is unclear whether the protein form a homodimer in vivo. Identified in a complex with the COP9 signalosome complex (CSN). Interacts with SMAD1, SMAD2 and SMAD3; the interaction is direct. Forms a complex with SMURF2 and SMAD7. Interacts with TGFBR1. Interacts with SART3; the interaction is direct. May interact with RNF20 and RNF40. May interact with PRKN. Interacts with INCA1. (Microbial infection) Interacts with human papillomavirus type 16 protein E6. Phosphorylated. Phosphorylation protects against ubiquitination and subsequent degradation by the proteasome. In terms of processing, ubiquitinated, leading to degradation by the proteasome. In terms of tissue distribution, expressed in skeletal muscle, kidney, heart, placenta, liver, thymus, lung, and ovary, with little or no expression in other tissues.

It localises to the cytoplasm. The protein localises to the nucleus. It is found in the mitochondrion. It catalyses the reaction Thiol-dependent hydrolysis of ester, thioester, amide, peptide and isopeptide bonds formed by the C-terminal Gly of ubiquitin (a 76-residue protein attached to proteins as an intracellular targeting signal).. In terms of biological role, hydrolase that removes conjugated ubiquitin from target proteins and regulates various pathways such as the TGF-beta receptor signaling, NF-kappa-B and RNF41/NRDP1-PRKN pathways. Acts as a key regulator of TGF-beta receptor signaling pathway, but the precise mechanism is still unclear: according to a report, acts by promoting deubiquitination of monoubiquitinated R-SMADs (SMAD1, SMAD2 and/or SMAD3), thereby alleviating inhibition of R-SMADs and promoting activation of TGF-beta target genes. According to another reports, regulates the TGF-beta receptor signaling pathway by mediating deubiquitination and stabilization of TGFBR1, leading to an enhanced TGF-beta signal. Able to mediate deubiquitination of monoubiquitinated substrates, 'Lys-27'-, 'Lys-48'- and 'Lys-63'-linked polyubiquitin chains. May also regulate gene expression and/or DNA repair through the deubiquitination of histone H2B. Acts as an inhibitor of mitophagy by counteracting the action of parkin (PRKN): hydrolyzes cleavage of 'Lys-48'- and 'Lys-63'-linked polyubiquitin chains attached by parkin on target proteins such as MFN2, thereby reducing parkin's ability to drive mitophagy. Acts as an associated component of COP9 signalosome complex (CSN) and regulates different pathways via this association: regulates NF-kappa-B by mediating deubiquitination of NFKBIA and deubiquitinates substrates bound to VCP. Involved in endosome organization by mediating deubiquitination of SQSTM1: ubiquitinated SQSTM1 forms a molecular bridge that restrains cognate vesicles in the perinuclear region and its deubiquitination releases target vesicles for fast transport into the cell periphery. Acts as a negative regulator of antifungal immunity by mediating 'Lys-27'-linked deubiquitination of CARD9, thereby inactivating CARD9. Functionally, (Microbial infection) Protects APC and human papillomavirus type 16 protein E6 against degradation via the ubiquitin proteasome pathway. The protein is Ubiquitin carboxyl-terminal hydrolase 15 of Homo sapiens (Human).